The primary structure comprises 638 residues: Chaperone protein DnaK (638 aa).

Threonine 198 carries the phosphothreonine; by autocatalysis modification. 2 disordered regions span residues 539–559 and 602–638; these read DGLA…LASD and QAKA…DDKK. Over residues 611 to 623 the composition is skewed to basic and acidic residues; that stretch reads GQAHDAGQEKPAD. The segment covering 624 to 638 has biased composition (acidic residues); sequence DVVDAEFEEVKDDKK.

The protein belongs to the heat shock protein 70 family.

Acts as a chaperone. The chain is Chaperone protein DnaK from Shewanella frigidimarina (strain NCIMB 400).